The following is a 643-amino-acid chain: 1-deoxy-D-xylulose-5-phosphate synthase (643 aa).

Thiamine diphosphate-binding positions include His78 and 119 to 121 (AHS). A Mg(2+)-binding site is contributed by Asp150. Thiamine diphosphate-binding positions include 151–152 (GS), Asn179, Tyr288, and Glu370. Asn179 contributes to the Mg(2+) binding site.

It belongs to the transketolase family. DXPS subfamily. Homodimer. The cofactor is Mg(2+). It depends on thiamine diphosphate as a cofactor.

The catalysed reaction is D-glyceraldehyde 3-phosphate + pyruvate + H(+) = 1-deoxy-D-xylulose 5-phosphate + CO2. It functions in the pathway metabolic intermediate biosynthesis; 1-deoxy-D-xylulose 5-phosphate biosynthesis; 1-deoxy-D-xylulose 5-phosphate from D-glyceraldehyde 3-phosphate and pyruvate: step 1/1. Catalyzes the acyloin condensation reaction between C atoms 2 and 3 of pyruvate and glyceraldehyde 3-phosphate to yield 1-deoxy-D-xylulose-5-phosphate (DXP). This is 1-deoxy-D-xylulose-5-phosphate synthase from Brucella suis (strain ATCC 23445 / NCTC 10510).